The chain runs to 414 residues: Putative gustatory receptor 47b (414 aa).

The Cytoplasmic portion of the chain corresponds to 1 to 5 (MQRDD). Residues 6–26 (GFVYCYGNLYSLLLYWGLVTI) form a helical membrane-spanning segment. Residues 27-40 (RVRSPDRGGAFSNR) lie on the Extracellular side of the membrane. The chain crosses the membrane as a helical span at residues 41 to 61 (WTVCYALFTRSFMVICFMATV). The Cytoplasmic segment spans residues 62–142 (MTKLRDPEMS…QWNYRRARLK (81 aa)). A helical transmembrane segment spans residues 143–163 (YWYGTVIVGFCFFSFSISLIF). Over 164 to 182 (DTTRCTCGIPSTLLMAFTY) the chain is Extracellular. The helical transmembrane segment at 183-203 (TLLTSSVGLLGFVHIGIMDFI) threads the bilayer. Over 204 to 249 (RVRLRLVQQLLHQLYQADDSSEVHERIAYLFEMSKRCSFLLAELNG) the chain is Cytoplasmic. Residues 250–270 (VFGFAAAAGIFYDFTIMTCFV) form a helical membrane-spanning segment. Residues 271–291 (YVICQKLLEREPWDPEYVYML) lie on the Extracellular side of the membrane. A helical membrane pass occupies residues 292–312 (LHVAIHTYKVVITSTYGYLLL). The Cytoplasmic portion of the chain corresponds to 313 to 364 (REKRNCMHLLSQYSRYFSGQDVARRKTEDFQHWRMHNRQAAMVGSTTLLSVS). A helical membrane pass occupies residues 365-385 (TIYLVYNGMANYVIILVQLLF). At 386-414 (QQQQIKDHQLTSGKDVDIVGPMGPITHMD) the chain is on the extracellular side.

The protein belongs to the insect chemoreceptor superfamily. Gustatory receptor (GR) family. Gr57a subfamily. As to expression, expressed in neurons of the terminal external chemosensory organ of larvae.

The protein localises to the cell membrane. Functionally, probable gustatory receptor which mediates acceptance or avoidance behavior, depending on its substrates. The protein is Putative gustatory receptor 47b (Gr47b) of Drosophila melanogaster (Fruit fly).